The primary structure comprises 262 residues: Short-chain reductase protein NovJ (262 aa).

NADP(+)-binding positions include 23 to 26 and 73 to 74; these read GAGR and DV. A substrate-binding site is contributed by Ser-152. Tyr-164 acts as the Proton acceptor in catalysis. 164–168 lines the NADP(+) pocket; that stretch reads YATAK.

It belongs to the short-chain dehydrogenases/reductases (SDR) family. As to quaternary structure, heterotetramer; the NovJ(2)K(2) heterotetramer is composed of subunits of 2 NovJ and 2 subunits of NovK.

It functions in the pathway antibiotic biosynthesis; novobiocin biosynthesis. Catalytic subunit of the NovJ(2)K(2) heterotetramer that catalyzes the NADPH-dependent reduction of the tyrosyl moiety of L-beta-OH-Tyr-S-NovH intermediate to yield the tethered beta-ketotyrosyl-S-NovH in the novobiocin biosynthesis pathway. Novobiocin is an aminocoumarin family antibiotic that targets bacterial DNA gyrases. The protein is Short-chain reductase protein NovJ (novJ) of Streptomyces niveus (Streptomyces spheroides).